Reading from the N-terminus, the 241-residue chain is Endodeoxyribonuclease NucC (241 aa).

Active-site residues include Asp-73, Glu-104, and Lys-106. Positions 73 and 104 each coordinate Mg(2+).

This sequence belongs to the NucC endonuclease family. As to quaternary structure, self-oligomerizes. Forms homotrimers; in the presence of cAAA the trimers associate face-to-face to form homohexamers. The 2 cAAA-binding sites are on the exterior of the hexamer at the three-way junction, there are maximally 2 cyclic nucleotides per hexamer. The cofactor is Mg(2+).

With respect to regulation, activated by cAAA and to a lesser extent cAA and cAAG; cAAA and cAA are products of its cognate CD-NTase. Cyclic nucleotide binding causes hexamerization. Cyclic nucleotide binding causes a series of shifts that enclose the cAAA molecule, enable hexamer formation and juxtapose pairs of active sites to allow dsDNA cleavage. Effector DNase of a CBASS antivirus system. CBASS (cyclic oligonucleotide-based antiphage signaling system) provides immunity against bacteriophage. The CD-NTase protein synthesizes cyclic nucleotides in response to infection; these serve as specific second messenger signals. The signals activate a diverse range of effectors, leading to bacterial cell death and thus abortive phage infection. A type III-C(AAA) CBASS system. Its function is as follows. A cyclic nucleotide-activated dsDNase. In the presence of 3',3',3'-cyclic AMP-AMP-AMP (cAAA), and to a lesser extent 3',3',3'-cyclic AMP-AMP-GMP (cAAG) and cyclic-di-AMP (c-di-AMP), endonucleolytically degrades dsDNA. Binds one cAAA in a pocket on one surface of the trimer; cAAA binding promotes hexamerization, which is necessary for nuclease activation. Also binds c-diAMP or linear di-AMP with lower affinity. The nuclease digests dsDNA to about 50 bp lengths with a 2-base 3' overhang and a consensus recognition site of 5'-Axx|T-3'. DNA has been modeled to contact a pair of juxtaposed active sites (one from each layer of the hexamer), accounting for cleavage on both strands and the 2-base overhang. In terms of biological role, protects E.coli strain JP313 against bacteriophage lambda cI- infection. When the cdnC-cap7-cap6-nucC operon is transformed into a susceptible strain it confers bacteriophage immunity. Mutations in the sensor (Cap7 also called HORMA) or effector proteins (CdnC, NucC) but not the disassembly protein (Cap6 also called Trip13) no longer confer immunity. The presence of the intact operon leads to culture collapse and cell death which occurs before the phage has finished its replication cycle, thus protecting non-infected bacteria by aborting the phage infection and preventing its propagation. This Escherichia coli (strain MS 115-1) protein is Endodeoxyribonuclease NucC.